A 63-amino-acid polypeptide reads, in one-letter code: ATP synthase subunit epsilon, mitochondrial (63 aa).

In terms of assembly, F-type ATP synthases have 2 components, the catalytic core F(1) and the membrane-embedded component F(0), linked together by a central stalk and a peripheral stalk. The central stalk, also called rotor shaft, is often seen as part of F(1). The peripheral stalk is seen as part of F(0). F(0) contains the membrane channel next to the rotor. F-type ATP synthases form dimers but each monomer functions independently in ATP generation. The dimer consists of 18 different polypeptides: ATP1 (subunit alpha, part of F(1), 3 molecules per monomer), ATP2 (subunit beta, part of F(1), 3 molecules per monomer), ATP3 (subunit gamma, part of the central stalk), ATP4 (subunit b, part of the peripheral stalk), ATP5/OSCP (subunit 5/OSCP, part of the peripheral stalk), ATP6 (subunit a, part of the peripheral stalk), ATP7 (subunit d, part of the peripheral stalk), ATP8 (subunit 8, part of the peripheral stalk), OLI1 (subunit c, part of the rotor, 10 molecules per monomer), ATP14 (subunit h, part of the peripheral stalk), ATP15 (subunit epsilon, part of the central stalk), ATP16 (subunit delta, part of the central stalk), ATP17 (subunit f, part of the peripheral stalk), ATP18 (subunit i/j, part of the peripheral stalk). Dimer-specific subunits are ATP19 (subunit k, at interface between monomers), ATP20 (subunit g, at interface between monomers), TIM11 (subunit e, at interface between monomers). Also contains subunit L.

It localises to the mitochondrion inner membrane. In terms of biological role, mitochondrial membrane ATP synthase (F(1)F(0) ATP synthase or Complex V) produces ATP from ADP in the presence of a proton gradient across the membrane which is generated by electron transport complexes of the respiratory chain. F-type ATP synthases consist of two structural domains, F(1) - containing the extramembraneous catalytic core, and F(0) - containing the membrane proton channel, linked together by a central stalk and a peripheral stalk. During catalysis, ATP synthesis in the catalytic domain of F(1) is coupled via a rotary mechanism of the central stalk subunits to proton translocation. Part of the complex F(1) domain and the central stalk which is part of the complex rotary element. Rotation of the central stalk against the surrounding alpha/ATP1(3)beta/ATP2(3) subunits leads to hydrolysis of ATP in three separate catalytic sites on the beta/ATP2 subunits. The polypeptide is ATP synthase subunit epsilon, mitochondrial (Pichia angusta (Yeast)).